Consider the following 65-residue polypeptide: Large ribosomal subunit protein bL28 (65 aa).

Residues 1–21 form a disordered region; sequence MAKKDQLTLRGPLYGNNRSHS.

Belongs to the bacterial ribosomal protein bL28 family.

This chain is Large ribosomal subunit protein bL28, found in Mycoplasma pneumoniae (strain ATCC 29342 / M129 / Subtype 1) (Mycoplasmoides pneumoniae).